The sequence spans 557 residues: Formate--tetrahydrofolate ligase (557 aa).

An ATP-binding site is contributed by Thr67–Thr74.

This sequence belongs to the formate--tetrahydrofolate ligase family.

The catalysed reaction is (6S)-5,6,7,8-tetrahydrofolate + formate + ATP = (6R)-10-formyltetrahydrofolate + ADP + phosphate. The protein operates within one-carbon metabolism; tetrahydrofolate interconversion. The protein is Formate--tetrahydrofolate ligase of Cereibacter sphaeroides (strain KD131 / KCTC 12085) (Rhodobacter sphaeroides).